Reading from the N-terminus, the 150-residue chain is Deoxyuridine 5'-triphosphate nucleotidohydrolase (150 aa).

Substrate contacts are provided by residues 69–71, Asn82, 86–88, and Met96; these read RSG and LID.

It belongs to the dUTPase family. It depends on Mg(2+) as a cofactor.

The catalysed reaction is dUTP + H2O = dUMP + diphosphate + H(+). The protein operates within pyrimidine metabolism; dUMP biosynthesis; dUMP from dCTP (dUTP route): step 2/2. In terms of biological role, this enzyme is involved in nucleotide metabolism: it produces dUMP, the immediate precursor of thymidine nucleotides and it decreases the intracellular concentration of dUTP so that uracil cannot be incorporated into DNA. This Acinetobacter baylyi (strain ATCC 33305 / BD413 / ADP1) protein is Deoxyuridine 5'-triphosphate nucleotidohydrolase.